A 419-amino-acid polypeptide reads, in one-letter code: Monooxygenase CTB7 (419 aa).

This sequence belongs to the aromatic-ring hydroxylase family. KMO subfamily.

The protein operates within mycotoxin biosynthesis. Functionally, monooxygenase; part of the gene cluster that mediates the biosynthesis of cercosporin, a light-activated, non-host-selective toxin. The perylenequinone chromophore of cercosporin absorbs light energy to attain an electronically-activated triplet state and produces active oxygen species such as the hydroxyl radical, superoxide, hydrogen peroxide or singlet oxygen upon reaction with oxygen molecules. These reactive oxygen species cause damage to various cellular components including lipids, proteins and nucleic acids. The first step of cercosporin biosynthesis is performed by the polyketide synthase CTB1 which catalyzes the formation of nor-toralactone. The starter unit acyltransferase (SAT) domain of CTB1 initiates polyketide extension by the selective utilization of acetyl-CoA, which is elongated to the heptaketide in the beta-ketoacyl synthase (KS) domain by successive condensations with six malonyl units introduced by the malonyl acyltransferase (MAT) domain. The product template (PT) domain catalyzes C4-C9 and C2-C11 aldol cyclizations and dehydrations to a trihydroxynaphthalene, which is thought to be delivered to the thioesterase (TE) domain for product release. The bifunctional enzyme CTB3 then methylates nor-toralactone to toralactone before conducting an unusual oxidative aromatic ring opening. The O-methyltransferase CTB2 further methylates the nascent OH-6 of the CBT3 product, blocking further oxidation at this site before the reductase CTB6 reduces the 2-oxopropyl ketone at position C7, giving naphthalene. The FAD-dependent monooxygenase CTB5 in concert with the multicopper oxidase CTB12 are responsible for homodimerization of naphthalene with CTB7 installing the dioxepine moiety, finally producing cercosporin. The fasciclin domain-containing protein CTB11 might act with CTB5 and CTB12 whereas the roles of CTB9 and CTB10 have still to be elucidated. The chain is Monooxygenase CTB7 from Cercospora beticola (Sugarbeet leaf spot fungus).